The chain runs to 210 residues: Uridine kinase P10 (210 aa).

Gly10–Thr18 provides a ligand contact to ATP. Asp41 is an active-site residue.

Belongs to the uridine kinase family. Interacts with host eIF-2B; this interaction disrupts the interaction between eIF2 and eIF-2B, which leads to the inhibition of stress granules formation.

The protein localises to the host cytoplasm. Its subcellular location is the host perinuclear region. It carries out the reaction uridine + ATP = UMP + ADP + H(+). In terms of biological role, inhibits the integrated stress response (ISR) in the infected cell by preventing the sequestration of eIF2B by phosphorylated EIF2S1/eIF-2alpha. Stress granule formation in response to EIF2S1/eIF-2alpha phosphorylation is thus inhibited, which allows protein synthesis and viral replication. Phosphorylates uridine to uridine monophosphate. The sequence is that of Uridine kinase P10 (ORF10) from Beluga whale coronavirus (strain SW1) (BwCoV).